The following is a 258-amino-acid chain: 4-hydroxy-tetrahydrodipicolinate reductase (258 aa).

Residues 8–13 (GVTGRM), 93–95 (GTT), and 117–120 (AANF) contribute to the NAD(+) site. Catalysis depends on His149, which acts as the Proton donor/acceptor. A (S)-2,3,4,5-tetrahydrodipicolinate-binding site is contributed by His150. Lys153 (proton donor) is an active-site residue. 159–160 (GT) is a binding site for (S)-2,3,4,5-tetrahydrodipicolinate.

The protein belongs to the DapB family.

The protein resides in the cytoplasm. The enzyme catalyses (S)-2,3,4,5-tetrahydrodipicolinate + NAD(+) + H2O = (2S,4S)-4-hydroxy-2,3,4,5-tetrahydrodipicolinate + NADH + H(+). The catalysed reaction is (S)-2,3,4,5-tetrahydrodipicolinate + NADP(+) + H2O = (2S,4S)-4-hydroxy-2,3,4,5-tetrahydrodipicolinate + NADPH + H(+). Its pathway is amino-acid biosynthesis; L-lysine biosynthesis via DAP pathway; (S)-tetrahydrodipicolinate from L-aspartate: step 4/4. Catalyzes the conversion of 4-hydroxy-tetrahydrodipicolinate (HTPA) to tetrahydrodipicolinate. The chain is 4-hydroxy-tetrahydrodipicolinate reductase from Thermomicrobium roseum (strain ATCC 27502 / DSM 5159 / P-2).